The following is a 106-amino-acid chain: uncharacterized protein (106 aa).

This is an uncharacterized protein from Rickettsia prowazekii (strain Madrid E).